Consider the following 268-residue polypeptide: MMSDTLRAVLLGIVEGVTEFLPVSSTGHLLLAERFFGLGEDGFWKSFAILIQLGAILAIVALYFFKLSRVAIGALTNPDDRRFIIGVLIAFLPAVIIGLIAGKYIKALLFDPWVVCFSLIVGGAILLWVDQIDLKPREHDATRYPLMMYLWIGVAQCLAMIPGVSRSGSTIVAAMLLGGDKRSAAEFSFFLAIPTMVGAFVYDFYKSRAEMTSDHLGLIAIGFVVSFITAMIVVKAFLGYVTRHGFVLFAWWRVIVGTLGLIALALGK.

Transmembrane regions (helical) follow at residues 47-67, 83-103, 109-129, 144-164, 184-204, 218-238, and 246-266; these read FAIL…FFKL, FIIG…IAGK, LFDP…LLWV, YPLM…IPGV, AAEF…VYDF, LIAI…KAFL, and FVLF…ALAL.

The protein belongs to the UppP family.

It is found in the cell inner membrane. The enzyme catalyses di-trans,octa-cis-undecaprenyl diphosphate + H2O = di-trans,octa-cis-undecaprenyl phosphate + phosphate + H(+). In terms of biological role, catalyzes the dephosphorylation of undecaprenyl diphosphate (UPP). Confers resistance to bacitracin. The protein is Undecaprenyl-diphosphatase of Bradyrhizobium sp. (strain ORS 278).